We begin with the raw amino-acid sequence, 1237 residues long: Zinc finger protein ZFAT (1237 aa).

The C2H2-type 1 zinc finger occupies 12–35; it reads FMCKCCNLFSPNQSELVTHVSEKH. Residues 50–110 form a disordered region; it reads RPLNTPENPN…GPLATEEGSR (61 aa). The segment covering 70–81 has biased composition (basic residues); sequence MKRKRGRPKGST. A C2H2-type 2; degenerate zinc finger spans residues 116–141; that stretch reads LECSKCCRKFSNTRQLRKHICIIVLN. The segment at 147-188 is disordered; the sequence is GDAGNESDLDLEKTYKEDDREKASKRPRAQKTEKVQKISGKE. Basic and acidic residues predominate over residues 156–186; sequence DLEKTYKEDDREKASKRPRAQKTEKVQKISG. 7 C2H2-type zinc fingers span residues 271-293, 299-321, 326-349, 354-377, 404-426, 432-454, and 458-481; these read FTCE…LRIH, YKCS…LRKH, FACD…ERVH, QHCR…RDMH, YDCH…MLVH, FACE…VRKH, and YVCA…REVH. Residues Cys-273, Cys-276, His-289, His-293, Cys-301, Cys-304, His-317, His-321, Cys-328, Cys-331, His-344, His-349, Cys-356, Cys-359, His-372, His-377, Cys-406, Cys-409, His-422, and His-426 each coordinate Zn(2+). Positions 460, 463, 476, and 481 each coordinate Zn(2+). Disordered regions lie at residues 551–576 and 601–671; these read VPGD…LSPC and SDTS…CLRA. The span at 565–574 shows a compositional bias: polar residues; it reads TPQSESSSLS. A compositionally biased stretch (low complexity) spans 601–617; it reads SDTSSAEPPAAAEATSD. C2H2-type zinc fingers lie at residues 737–759, 765–788, 793–817, and 825–848; these read LECE…VRTH, YYCS…IQKH, LKCP…LKVH, and YSCP…KTNH. Zn(2+) is bound by residues Cys-767, Cys-770, His-783, His-788, Cys-795, Cys-800, His-813, His-817, Cys-827, Cys-830, His-843, His-848, Cys-877, Cys-880, His-894, His-898, Cys-906, Cys-909, His-922, His-926, Cys-934, Cys-937, His-950, and Leu-953. Residues 875–898 form a C2H2-type 14; degenerate zinc finger; the sequence is MKCPYCDFYFMKNGSDLQRHIWAH. 5 C2H2-type zinc fingers span residues 904-926, 932-954, 961-983, 989-1012, and 1036-1059; these read FKCS…MNRH, HLCD…KLLH, FKCT…MEQH, FRCA…NRKH, and LKCP…KNKH.

Detected in spleen and thymus but not in liver, muscle, heart, kidney, brain, bone marrow or pancreas. Expressed in CD19+, CD4+ and CD8+ lymphocytes but not in CD11b+ lymphocytes or peritoneal macrophages (at protein level).

The protein localises to the nucleus. The protein resides in the cytoplasm. It is found in the cytosol. Functionally, may be involved in transcriptional regulation. Overexpression causes down-regulation of a number of genes involved in the immune response. Some genes are also up-regulated. In Mus musculus (Mouse), this protein is Zinc finger protein ZFAT (Zfat).